The primary structure comprises 530 residues: MQEFSLSTLLEMTVGLASGANNEERFHRLLDAVRKAVICDCVVLMSLHNDTLTPLAMQGLTRDTLGRRFVVSEHPRLAQICSADLPVRFAADCPLPDPFDGLLLDSEDDLPMHSCMGLPLHFGEQLLGILTLDSLKPDAFDHLSPRSLEILAAIAAATLKMTLTFSELENQAKQTQLRLEELNQEAWSRDSVEIIGNSGPMLAMKADIDVVAPSQFNILIHGETGVGKELVARTIHQRSNRKRQPLVYVNCAAIPENLLESELFGHVKGAFTGADRARMGKFALADGGTLFLDEIGELPLSAQSKILRALQNHEIQPVGQDRVQTVDVRILAATNRDLKKEVEAGRFRADLYHRLSVYPIYVPPLRERKGDLSLLAGYFVEQARRKLGITQLKLHGDVLSQLIQYPWPGNVRELEHVINRAALKAKARQRGRPVTTLKVEDLGELQGPRAAMVEPTAQDEPMLGEWIGELGLRDATDEFQRHLISETLTQADFNWAEAARRLQTDRANLTRLAKRLGITVSRSHSIERSR.

A Sigma-54 factor interaction domain is found at 194 to 423; the sequence is IIGNSGPMLA…LEHVINRAAL (230 aa). ATP-binding positions include 222–229 and 285–294; these read GETGVGKE and ADGGTLFLDE.

Functionally, involved in the regulation of different processes depending on the cell density. Acts together with sigma-54 to repress, perhaps indirectly, some genes. This is Regulatory protein LuxO (luxO) from Vibrio cholerae serotype O1 (strain ATCC 39541 / Classical Ogawa 395 / O395).